A 420-amino-acid chain; its full sequence is ATP phosphoribosyltransferase regulatory subunit (420 aa).

It belongs to the class-II aminoacyl-tRNA synthetase family. HisZ subfamily. In terms of assembly, heteromultimer composed of HisG and HisZ subunits.

The protein resides in the cytoplasm. It functions in the pathway amino-acid biosynthesis; L-histidine biosynthesis; L-histidine from 5-phospho-alpha-D-ribose 1-diphosphate: step 1/9. Its function is as follows. Required for the first step of histidine biosynthesis. May allow the feedback regulation of ATP phosphoribosyltransferase activity by histidine. The sequence is that of ATP phosphoribosyltransferase regulatory subunit from Bacillus mycoides (strain KBAB4) (Bacillus weihenstephanensis).